The primary structure comprises 361 residues: Protein RecA (361 aa).

Position 77 to 84 (77 to 84 (GPESSGKT)) interacts with ATP.

This sequence belongs to the RecA family.

The protein resides in the cytoplasm. Functionally, can catalyze the hydrolysis of ATP in the presence of single-stranded DNA, the ATP-dependent uptake of single-stranded DNA by duplex DNA, and the ATP-dependent hybridization of homologous single-stranded DNAs. It interacts with LexA causing its activation and leading to its autocatalytic cleavage. This is Protein RecA from Sinorhizobium fredii (strain NBRC 101917 / NGR234).